The primary structure comprises 460 residues: Zinc transporter 6 (460 aa).

At 1 to 33 (MGTIHLFRKSQRSLVGKLTHEFRLVAADRRSWK) the chain is on the cytoplasmic side. The helical transmembrane segment at 34 to 54 (ILLFGAINLICIGFLLMWCSS) threads the bilayer. Over 55-64 (TNSIALTAYT) the chain is Extracellular. The helical transmembrane segment at 65 to 85 (YLTIFDLFSLITCLISYWVMV) threads the bilayer. Residues 86-98 (KKPSPVYSFGFER) are Cytoplasmic-facing. Residues 99 to 119 (FEVLAVFASTVLAQLGALFIL) form a helical membrane-spanning segment. Topologically, residues 120 to 134 (KESAERFLEQPEIHT) are extracellular. The helical transmembrane segment at 135–155 (GRLLVGTFVALFFNLFTMLSV) threads the bilayer. The Cytoplasmic portion of the chain corresponds to 156–200 (RNKPFAYVSEAASTSWLQEHVADLSRSICGIIPGLSSIFLPRMNP). A helical transmembrane segment spans residues 201-221 (FVLIDIAGALALCITYMLIEI). At 222-228 (NNYYAVD) the chain is on the extracellular side. A helical transmembrane segment spans residues 229 to 249 (TASAIAIALMTFGTMYPMSVY). Over 250–460 (SGKVLLQTTP…GTNTRGQSRP (211 aa)) the chain is Cytoplasmic. The disordered stretch occupies residues 372–392 (PVTSTPAKPSSPPPEFSFNTP).

The protein belongs to the cation diffusion facilitator (CDF) transporter (TC 2.A.4) family. SLC30A subfamily. As to quaternary structure, heterodimer with SLC30A5; form a functional zinc ion transmembrane transporter.

The protein resides in the golgi apparatus. It localises to the trans-Golgi network membrane. Its function is as follows. Has probably no intrinsic transporter activity but together with SLC30A5 forms a functional zinc ion:proton antiporter heterodimer, mediating zinc entry into the lumen of organelles along the secretory pathway. As part of that zinc ion:proton antiporter, contributes to zinc ion homeostasis within the early secretory pathway and regulates the activation and folding of enzymes like alkaline phosphatases and enzymes involved in phosphatidylinositol glycan anchor biosynthesis. The protein is Zinc transporter 6 (SLC30A6) of Gallus gallus (Chicken).